Reading from the N-terminus, the 193-residue chain is ATP-dependent Clp protease proteolytic subunit (193 aa).

The Nucleophile role is filled by Ser-98. His-123 is a catalytic residue.

The protein belongs to the peptidase S14 family. Fourteen ClpP subunits assemble into 2 heptameric rings which stack back to back to give a disk-like structure with a central cavity, resembling the structure of eukaryotic proteasomes.

It is found in the cytoplasm. It carries out the reaction Hydrolysis of proteins to small peptides in the presence of ATP and magnesium. alpha-casein is the usual test substrate. In the absence of ATP, only oligopeptides shorter than five residues are hydrolyzed (such as succinyl-Leu-Tyr-|-NHMec, and Leu-Tyr-Leu-|-Tyr-Trp, in which cleavage of the -Tyr-|-Leu- and -Tyr-|-Trp bonds also occurs).. In terms of biological role, cleaves peptides in various proteins in a process that requires ATP hydrolysis. Has a chymotrypsin-like activity. Plays a major role in the degradation of misfolded proteins. The sequence is that of ATP-dependent Clp protease proteolytic subunit from Histophilus somni (strain 2336) (Haemophilus somnus).